We begin with the raw amino-acid sequence, 381 residues long: Glycerophosphocholine acyltransferase 1 (381 aa).

Topologically, residues 1 to 63 (MANNEDSNSN…IAKQAEEHER (63 aa)) are cytoplasmic. The chain crosses the membrane as a helical span at residues 64-84 (FINKVTHLVGVLGFGGFCFLL). Over 85–89 (GARPQ) the chain is Lumenal. A helical membrane pass occupies residues 90-110 (DIPLVYCFFYVIFVPLRWIYY). At 111–116 (RFKKWH) the chain is on the cytoplasmic side. Residues 117-137 (YYLLDFCYYANTIFLVDLLLY) form a helical membrane-spanning segment. Residues 138–141 (PKNE) are Lumenal-facing. A helical transmembrane segment spans residues 142 to 162 (KLFMVCFSFAEGPLAWAIIVW). The Cytoplasmic segment spans residues 163–173 (RCSLVFSSPDK). A helical transmembrane segment spans residues 174-194 (IVSVLIHLLPGLVFFTIRWWN). At 195–223 (PATFAAMHPVGTDRRVSWPYVEDKAYLFT) the chain is on the lumenal side. A helical membrane pass occupies residues 224-244 (WLFLVPLVVYTLWQVLYFLIV). Over 245–291 (NVLRRQRLLRDPEVMTSYRELSKKAEKANNKLWQLSGLLGDQNRIWM) the chain is Cytoplasmic. The chain crosses the membrane as a helical span at residues 292–312 (YILFQAIFTVATMALTVPIFL). The Lumenal segment spans residues 313–315 (SYR). Residues 316–336 (LHVIFQILKISAAVWNGGSFL) traverse the membrane as a helical segment. Topologically, residues 337-381 (LEVMPRQVIQKEKKKKAEMQPIEEQILHHEAVSHPTENEPKSTET) are cytoplasmic.

It belongs to the GPC1 family.

The protein localises to the membrane. The catalysed reaction is sn-glycerol 3-phosphocholine + an acyl-CoA = a 1-acyl-sn-glycero-3-phosphocholine + CoA. It catalyses the reaction sn-glycero-3-phosphoethanolamine + an acyl-CoA = a monoacyl-sn-glycero-3-phosphoethanolamine + CoA. The enzyme catalyses sn-glycerol 3-phosphocholine + (9Z)-octadecenoyl-CoA = (9Z-octadecenoyl)-sn-glycero-3-phosphocholine + CoA. In terms of biological role, glycerophosphocholine acyltransferase (GPCAT) that utilizes acyl-CoA to acylate glycero-3-phosphocholine (GPC), forming lysophosphatidylcholine (LPC). Shows broad acyl specificities with a preference for 16:0-CoA, polyunsaturated acyl-CoA, and the hydroxylated ricinoleoyl-CoA. Also catalyzes the acylation of glycero-3-phosphoethanolamine (GPE) with acyl-CoA. In addition to acyl-CoA, GPCAT efficiently utilizes LPC and lysophosphatidylethanolamine (LPE) as acyl donors in the acylation of GPC. Contributes to the maintenance of phosphatidylcholine (PC) homeostasis and might also have specific functions in acyl editing of PC, such as transferring acyl groups modified at the sn-2 position of PC to the sn-1. The protein is Glycerophosphocholine acyltransferase 1 of Arabidopsis thaliana (Mouse-ear cress).